Here is a 203-residue protein sequence, read N- to C-terminus: VEL1-related protein SPBPB2B2.15 (203 aa).

Residues 1–16 (MFKNLIFLFFIGLATA) form the signal peptide.

This sequence belongs to the VEL1 family.

It is found in the cytoplasm. The protein resides in the cytosol. The protein is VEL1-related protein SPBPB2B2.15 of Schizosaccharomyces pombe (strain 972 / ATCC 24843) (Fission yeast).